The following is a 311-amino-acid chain: MEGGYEQGGGASRYFHNLFRPEIHHQQLQPQGGINLIDQHHHQHQQHQQQQQPSDDSRESDHSNKDHHQQGRPDSDPNTSSSAPGKRPRGRPPGSKNKAKPPIIVTRDSPNALRSHVLEVSPGADIVESVSTYARRRGRGVSVLGGNGTVSNVTLRQPVTPGNGGGVSGGGGVVTLHGRFEILSLTGTVLPPPAPPGAGGLSIFLAGGQGQVVGGSVVAPLIASAPVILMAASFSNAVFERLPIEEEEEEGGGGGGGGGGGPPQMQQAPSASPPSGVTGQGQLGGNVGGYGFSGDPHLLGWGAGTPSRPPF.

Residues 40-105 (HHHQHQQHQQ…KNKAKPPIIV (66 aa)) are disordered. Over residues 55-75 (DDSRESDHSNKDHHQQGRPDS) the composition is skewed to basic and acidic residues. Residues 86 to 98 (KRPRGRPPGSKNK) constitute a DNA-binding region (a.T hook). A PPC domain is found at 110–258 (PNALRSHVLE…EEGGGGGGGG (149 aa)). The required for the binding to non-AHL interactors stretch occupies residues 178-183 (GRFEIL). Residues 246 to 311 (EEEEEGGGGG…GAGTPSRPPF (66 aa)) are disordered. The span at 252-262 (GGGGGGGGGGP) shows a compositional bias: gly residues. A compositionally biased stretch (low complexity) spans 263–277 (PQMQQAPSASPPSGV). A compositionally biased stretch (gly residues) spans 278 to 292 (TGQGQLGGNVGGYGF).

As to quaternary structure, homodimer. Interacts with AHL12, AHL25, AHL29, TCP4, TCP13, EF114, ATAF2/NAC081, histone H2B.1, histone H3.3 and histone H4. As to expression, expressed in the hypocotyl and the vascular tissue of seedling.

It is found in the nucleus. Its function is as follows. Transcription factor that specifically binds AT-rich DNA sequences related to the nuclear matrix attachment regions (MARs). Negatively regulates plant innate immunity (PTI) to pathogens through the down-regulation of the PAMP-triggered FRK1 expression. Acts redundantly with AHL18, AHL22 and AHL29 in the regulation of flowering and regulation of the hypocotyl elongation. Acts as a chromatin remodeling factor that negatively regulates the leaf senescence. Acts redundantly with AHL29/SOB3 to modulate hypocotyl growth inhibition in response to light. This Arabidopsis thaliana (Mouse-ear cress) protein is AT-hook motif nuclear-localized protein 27.